Consider the following 310-residue polypeptide: L-lactate dehydrogenase (310 aa).

NAD(+) contacts are provided by valine 11, aspartate 32, and arginine 37. Residues glutamine 79, arginine 85, and 117 to 120 each bind substrate; that span reads NPVD. Residues 115–117 and threonine 140 each bind NAD(+); that span reads VTN. A substrate-binding site is contributed by 145-148; that stretch reads DTAR. Residues arginine 150 and histidine 165 each coordinate beta-D-fructose 1,6-bisphosphate. The Proton acceptor role is filled by histidine 172. A Phosphotyrosine modification is found at tyrosine 221. Residue threonine 230 participates in substrate binding.

The protein belongs to the LDH/MDH superfamily. LDH family. As to quaternary structure, homotetramer.

The protein resides in the cytoplasm. It catalyses the reaction (S)-lactate + NAD(+) = pyruvate + NADH + H(+). Its pathway is fermentation; pyruvate fermentation to lactate; (S)-lactate from pyruvate: step 1/1. Allosterically activated by fructose 1,6-bisphosphate (FBP). In terms of biological role, catalyzes the conversion of lactate to pyruvate. This is L-lactate dehydrogenase from Fervidobacterium nodosum (strain ATCC 35602 / DSM 5306 / Rt17-B1).